A 681-amino-acid chain; its full sequence is DNA-directed RNA polymerase subunit beta' (681 aa).

Residues C69, C71, C87, and C90 each contribute to the Zn(2+) site. The Mg(2+) site is built by D489, D491, and D493.

It belongs to the RNA polymerase beta' chain family. RpoC1 subfamily. In plastids the minimal PEP RNA polymerase catalytic core is composed of four subunits: alpha, beta, beta', and beta''. When a (nuclear-encoded) sigma factor is associated with the core the holoenzyme is formed, which can initiate transcription. Mg(2+) serves as cofactor. Zn(2+) is required as a cofactor.

The protein localises to the plastid. Its subcellular location is the chloroplast. The enzyme catalyses RNA(n) + a ribonucleoside 5'-triphosphate = RNA(n+1) + diphosphate. DNA-dependent RNA polymerase catalyzes the transcription of DNA into RNA using the four ribonucleoside triphosphates as substrates. This Anthoceros angustus (Hornwort) protein is DNA-directed RNA polymerase subunit beta'.